Consider the following 187-residue polypeptide: Elongation factor P (187 aa).

The protein belongs to the elongation factor P family.

Its subcellular location is the cytoplasm. Its pathway is protein biosynthesis; polypeptide chain elongation. In terms of biological role, involved in peptide bond synthesis. Stimulates efficient translation and peptide-bond synthesis on native or reconstituted 70S ribosomes in vitro. Probably functions indirectly by altering the affinity of the ribosome for aminoacyl-tRNA, thus increasing their reactivity as acceptors for peptidyl transferase. In Prochlorococcus marinus (strain NATL2A), this protein is Elongation factor P.